The chain runs to 274 residues: uncharacterized protein (274 aa).

Positions methionine 1–alanine 19 are cleaved as a signal peptide.

This is an uncharacterized protein from Rickettsia prowazekii (strain Madrid E).